Here is a 423-residue protein sequence, read N- to C-terminus: GTPase Obg (423 aa).

In terms of domain architecture, Obg spans 1 to 158 (MFIDTARIYI…MWVRLELKLL (158 aa)). The 171-residue stretch at 159–329 (ADVGLIGFPN…LLDKTIEILS (171 aa)) folds into the OBG-type G domain. Residues 165 to 172 (GFPNAGKS), 190 to 194 (FTTLT), 211 to 214 (DIPG), 281 to 284 (NKID), and 310 to 312 (SAL) contribute to the GTP site. 2 residues coordinate Mg(2+): serine 172 and threonine 192. The 78-residue stretch at 346–423 (TPPEEEETLN…VRDFEFEYYE (78 aa)) folds into the OCT domain.

This sequence belongs to the TRAFAC class OBG-HflX-like GTPase superfamily. OBG GTPase family. Monomer. Mg(2+) serves as cofactor.

It localises to the cytoplasm. In terms of biological role, an essential GTPase which binds GTP, GDP and possibly (p)ppGpp with moderate affinity, with high nucleotide exchange rates and a fairly low GTP hydrolysis rate. Plays a role in control of the cell cycle, stress response, ribosome biogenesis and in those bacteria that undergo differentiation, in morphogenesis control. The sequence is that of GTPase Obg from Thermoanaerobacter pseudethanolicus (strain ATCC 33223 / 39E) (Clostridium thermohydrosulfuricum).